Consider the following 426-residue polypeptide: 3-phosphoshikimate 1-carboxyvinyltransferase (426 aa).

Lysine 22, serine 23, and arginine 27 together coordinate 3-phosphoshikimate. Residue lysine 22 coordinates phosphoenolpyruvate. Glycine 96 and arginine 124 together coordinate phosphoenolpyruvate. 3-phosphoshikimate is bound by residues serine 170, serine 171, glutamine 172, serine 198, aspartate 314, asparagine 337, and lysine 341. Glutamine 172 provides a ligand contact to phosphoenolpyruvate. The Proton acceptor role is filled by aspartate 314. Phosphoenolpyruvate contacts are provided by arginine 345, arginine 387, and lysine 412.

This sequence belongs to the EPSP synthase family. Monomer.

It is found in the cytoplasm. The enzyme catalyses 3-phosphoshikimate + phosphoenolpyruvate = 5-O-(1-carboxyvinyl)-3-phosphoshikimate + phosphate. The protein operates within metabolic intermediate biosynthesis; chorismate biosynthesis; chorismate from D-erythrose 4-phosphate and phosphoenolpyruvate: step 6/7. Catalyzes the transfer of the enolpyruvyl moiety of phosphoenolpyruvate (PEP) to the 5-hydroxyl of shikimate-3-phosphate (S3P) to produce enolpyruvyl shikimate-3-phosphate and inorganic phosphate. This is 3-phosphoshikimate 1-carboxyvinyltransferase from Shewanella halifaxensis (strain HAW-EB4).